The sequence spans 344 residues: tRNA N6-adenosine threonylcarbamoyltransferase (344 aa).

Positions 111 and 115 each coordinate Fe cation. Residues 134–138 (LVSGG), D167, G180, and N272 contribute to the substrate site. D300 contributes to the Fe cation binding site.

It belongs to the KAE1 / TsaD family. The cofactor is Fe(2+).

It localises to the cytoplasm. The enzyme catalyses L-threonylcarbamoyladenylate + adenosine(37) in tRNA = N(6)-L-threonylcarbamoyladenosine(37) in tRNA + AMP + H(+). In terms of biological role, required for the formation of a threonylcarbamoyl group on adenosine at position 37 (t(6)A37) in tRNAs that read codons beginning with adenine. Is involved in the transfer of the threonylcarbamoyl moiety of threonylcarbamoyl-AMP (TC-AMP) to the N6 group of A37, together with TsaE and TsaB. TsaD likely plays a direct catalytic role in this reaction. In Idiomarina loihiensis (strain ATCC BAA-735 / DSM 15497 / L2-TR), this protein is tRNA N6-adenosine threonylcarbamoyltransferase.